Here is a 353-residue protein sequence, read N- to C-terminus: MTIALGKFTKEEKDLFDIMDDWLRRDRFVFVGWSGLLLFPCAYFALGGWFTGTTFVTSWYTHGLASSYLEGCNFLTAAVSTPANSLAHSLLLLWGPEAQGDFTRWCQLGGLWTFVALHGAFGLIGFMLRQFELARSVQLRPYNAIAFSAPIAVFVSVFLIYPLGQSGWFFAPSFGVAAIFRFILFFQGFHNWTLNPFHMMGVAGVLGAALLCAIHGATVENTLFEDGDGANTFRAFNPTQAEETYSMVTANRFWSQIFGVAFSNKRWLHFFMLFVPVTGLWMSALGVVGLALNLRAYDFVSQEIRAAEDPEFETFYTKNILLNEGIRAWMAAQDQPHENLIFPEEVLPRGNAL.

Thr2 bears the N-acetylthreonine mark. Thr2 is modified (phosphothreonine). The chain crosses the membrane as a helical span at residues 41–61; it reads CAYFALGGWFTGTTFVTSWYT. His118 lines the chlorophyll a pocket. Residues 125–141 traverse the membrane as a helical segment; the sequence is GFMLRQFELARSVQLRP. Positions 130 and 143 each coordinate pheophytin a. The helical transmembrane segment at 153–166 threads the bilayer; the sequence is VFVSVFLIYPLGQS. A chlorophyll a-binding site is contributed by His198. The chain crosses the membrane as a helical span at residues 208-228; that stretch reads AALLCAIHGATVENTLFEDGD. A plastoquinone-binding residues include His215 and Phe262. His215 contributes to the Fe cation binding site. His269 lines the Fe cation pocket. Residues 279–295 form a helical membrane-spanning segment; that stretch reads GLWMSALGVVGLALNLR.

Belongs to the reaction center PufL/M/PsbA/D family. As to quaternary structure, PSII is composed of 1 copy each of membrane proteins PsbA, PsbB, PsbC, PsbD, PsbE, PsbF, PsbH, PsbI, PsbJ, PsbK, PsbL, PsbM, PsbT, PsbX, PsbY, PsbZ, Psb30/Ycf12, at least 3 peripheral proteins of the oxygen-evolving complex and a large number of cofactors. It forms dimeric complexes. The D1/D2 heterodimer binds P680, chlorophylls that are the primary electron donor of PSII, and subsequent electron acceptors. It shares a non-heme iron and each subunit binds pheophytin, quinone, additional chlorophylls, carotenoids and lipids. There is also a Cl(-1) ion associated with D1 and D2, which is required for oxygen evolution. The PSII complex binds additional chlorophylls, carotenoids and specific lipids. is required as a cofactor.

It is found in the plastid. Its subcellular location is the chloroplast thylakoid membrane. It carries out the reaction 2 a plastoquinone + 4 hnu + 2 H2O = 2 a plastoquinol + O2. In terms of biological role, photosystem II (PSII) is a light-driven water:plastoquinone oxidoreductase that uses light energy to abstract electrons from H(2)O, generating O(2) and a proton gradient subsequently used for ATP formation. It consists of a core antenna complex that captures photons, and an electron transfer chain that converts photonic excitation into a charge separation. The D1/D2 (PsbA/PsbD) reaction center heterodimer binds P680, the primary electron donor of PSII as well as several subsequent electron acceptors. D2 is needed for assembly of a stable PSII complex. This chain is Photosystem II D2 protein, found in Citrus sinensis (Sweet orange).